The chain runs to 249 residues: Probable transcriptional regulatory protein ZMO0153 (249 aa).

The protein belongs to the TACO1 family.

It is found in the cytoplasm. In Zymomonas mobilis subsp. mobilis (strain ATCC 31821 / ZM4 / CP4), this protein is Probable transcriptional regulatory protein ZMO0153.